Consider the following 236-residue polypeptide: Orotidine 5'-phosphate decarboxylase (236 aa).

Substrate-binding positions include aspartate 16, lysine 38, 65–74, threonine 124, arginine 185, glutamine 194, glycine 214, and arginine 215; that span reads DLKYHDIPNT. Residue lysine 67 is the Proton donor of the active site.

This sequence belongs to the OMP decarboxylase family. Type 1 subfamily. In terms of assembly, homodimer.

It carries out the reaction orotidine 5'-phosphate + H(+) = UMP + CO2. It functions in the pathway pyrimidine metabolism; UMP biosynthesis via de novo pathway; UMP from orotate: step 2/2. Catalyzes the decarboxylation of orotidine 5'-monophosphate (OMP) to uridine 5'-monophosphate (UMP). The sequence is that of Orotidine 5'-phosphate decarboxylase from Hydrogenovibrio crunogenus (strain DSM 25203 / XCL-2) (Thiomicrospira crunogena).